A 978-amino-acid polypeptide reads, in one-letter code: Copper-transporting ATPase HMA4 (978 aa).

A compositionally biased stretch (basic and acidic residues) spans 1-11 (MEQNGENHLKD). Residues 1 to 35 (MEQNGENHLKDPLLQADGGGSGASPAGASPRKERK) form a disordered region. 3 HMA domains span residues 37-103 (RKVM…FEVD), 111-177 (AVCR…FGAD), and 186-252 (NKVH…QPPK). Positions 48, 51, 122, and 125 each coordinate Cu(+). 8 helical membrane passes run 280–300 (FLWS…LPMI), 315–335 (MTIG…IIGW), 352–372 (MDVL…YIVL), 385–405 (FFET…LEVV), 545–565 (FFVP…FVAG), 584–604 (LALQ…LGLA), 907–927 (VWAL…LFPF), and 935–955 (WLAG…SLLL).

The protein belongs to the cation transport ATPase (P-type) (TC 3.A.3) family. Type IB subfamily. Highly expressed in roots. Expressed in vascular tissues of the stele, mainly in pericycle cells.

It localises to the vacuole membrane. The enzyme catalyses Cu(+)(in) + ATP + H2O = Cu(+)(out) + ADP + phosphate + H(+). Its function is as follows. Copper (Cu) transporter that mediates Cu transport in root vacuoles. Involved in Cu detoxification by sequestrating Cu into root vacuoles and limiting translocation of Cu from the roots to the shoots, and accumulation in grains. This is Copper-transporting ATPase HMA4 from Oryza sativa subsp. japonica (Rice).